We begin with the raw amino-acid sequence, 357 residues long: UDP-N-acetylglucosamine--N-acetylmuramyl-(pentapeptide) pyrophosphoryl-undecaprenol N-acetylglucosamine transferase (357 aa).

UDP-N-acetyl-alpha-D-glucosamine is bound by residues 13-15 (TGG), N125, R161, S189, I243, and Q288.

It belongs to the glycosyltransferase 28 family. MurG subfamily.

Its subcellular location is the cell inner membrane. It catalyses the reaction di-trans,octa-cis-undecaprenyl diphospho-N-acetyl-alpha-D-muramoyl-L-alanyl-D-glutamyl-meso-2,6-diaminopimeloyl-D-alanyl-D-alanine + UDP-N-acetyl-alpha-D-glucosamine = di-trans,octa-cis-undecaprenyl diphospho-[N-acetyl-alpha-D-glucosaminyl-(1-&gt;4)]-N-acetyl-alpha-D-muramoyl-L-alanyl-D-glutamyl-meso-2,6-diaminopimeloyl-D-alanyl-D-alanine + UDP + H(+). It participates in cell wall biogenesis; peptidoglycan biosynthesis. Cell wall formation. Catalyzes the transfer of a GlcNAc subunit on undecaprenyl-pyrophosphoryl-MurNAc-pentapeptide (lipid intermediate I) to form undecaprenyl-pyrophosphoryl-MurNAc-(pentapeptide)GlcNAc (lipid intermediate II). The sequence is that of UDP-N-acetylglucosamine--N-acetylmuramyl-(pentapeptide) pyrophosphoryl-undecaprenol N-acetylglucosamine transferase from Bordetella petrii (strain ATCC BAA-461 / DSM 12804 / CCUG 43448).